We begin with the raw amino-acid sequence, 110 residues long: uncharacterized protein (110 aa).

A signal peptide spans 1-19 (MKYLVGCLCLAAICLSAGA). N101 is a glycosylation site (N-linked (GlcNAc...) asparagine).

As to expression, component of the acid-soluble and acid-insoluble organic matrix of prismatic shell layers (at protein level).

It localises to the secreted. This is an uncharacterized protein from Haliotis asinina (Donkey's ear abalone).